The primary structure comprises 200 residues: Phospholipase A2 inhibitor NAI (200 aa).

A signal peptide spans 1-19 (MKSLLFCCLFGTFLATGMC). 8 cysteine pairs are disulfide-bonded: Cys22-Cys46, Cys25-Cys32, Cys39-Cys67, Cys73-Cys94, Cys95-Cys100, Cys120-Cys145, Cys138-Cys165, and Cys171-Cys191.

Belongs to the CNF-like-inhibitor family. Heterotrimer of 2 subunits A and 1 subunit B; non-covalently linked. As to expression, expressed by the liver.

The protein localises to the secreted. Inhibits the enzymatic activity of all phospholipase A2 tested, binding with micromole to nanomole affinity. This Notechis ater (Black tiger snake) protein is Phospholipase A2 inhibitor NAI.